The primary structure comprises 809 residues: Lon protease (809 aa).

The Lon N-terminal domain maps to 42-242; that stretch reads LVIYPLGGRP…KVLTLLKKEL (201 aa). Residue 395–402 participates in ATP binding; the sequence is GPPGVGKT. The Lon proteolytic domain maps to 629-809; sequence LTGVGIVTGL…YAEVAKLVFG (181 aa). Residues S716 and K759 contribute to the active site.

This sequence belongs to the peptidase S16 family. Homohexamer. Organized in a ring with a central cavity.

It localises to the cytoplasm. It catalyses the reaction Hydrolysis of proteins in presence of ATP.. ATP-dependent serine protease that mediates the selective degradation of mutant and abnormal proteins as well as certain short-lived regulatory proteins. Required for cellular homeostasis and for survival from DNA damage and developmental changes induced by stress. Degrades polypeptides processively to yield small peptide fragments that are 5 to 10 amino acids long. Binds to DNA in a double-stranded, site-specific manner. This Magnetococcus marinus (strain ATCC BAA-1437 / JCM 17883 / MC-1) protein is Lon protease.